Here is a 261-residue protein sequence, read N- to C-terminus: 5'-nucleotidase SurE (261 aa).

Residues aspartate 8, aspartate 9, serine 39, and asparagine 94 each contribute to the a divalent metal cation site.

The protein belongs to the SurE nucleotidase family. It depends on a divalent metal cation as a cofactor.

Its subcellular location is the cytoplasm. It catalyses the reaction a ribonucleoside 5'-phosphate + H2O = a ribonucleoside + phosphate. Nucleotidase that shows phosphatase activity on nucleoside 5'-monophosphates. This chain is 5'-nucleotidase SurE, found in Archaeoglobus fulgidus (strain ATCC 49558 / DSM 4304 / JCM 9628 / NBRC 100126 / VC-16).